The sequence spans 553 residues: MAAVSLRLGDLVWGKLGRYPPWPGKIVNPPKDLKKPRGKKCFFVKFFGTEDHAWIKVEQLKPYHAHKEEMIKINKGKRFQQAVDAVEEFLRRAKGKDQTSSHNSSDDKNRRNSSEERSRPNSGDEKRKLSLSEGKVKKNMGEGKKRVSSGSSERGSKSPLKRAQEQSPRKRGRPPKDEKDLTIPESSTVKGMMAGPMAAFKWQPTATEPVKDADPHFHHFLLSQTEKPAVCYQAITKKLKICEEETGSTSIQAADSTAVNGSITPTDKKIGFLGLGLMGSGIVSNLLKMGHTVTVWDRTAEKCDLFIQEGARLGRTPAEVVSTCDITFACVSDPKAAKDLVLGPSGVLQGIRPRKCYVDMSTVDADTVTELAQVIVSRGGRFLEAPVSGNQQLSNDGMLVILAAGDRGLYEDCSSCFQAMGKTSFFLGEVGNAAKMMLIVNMVQGSFMATIAEGLTLAQVTGQSQQTLLDILNQGQLASIFLDQKCQNILQGNFKPDFYLKYIQKDLRLAIALGDAVNHPTPMAAAANEVYKRAKALDQSDNDMSAVYRAYIH.

The 59-residue stretch at 8-66 (LGDLVWGKLGRYPPWPGKIVNPPKDLKKPRGKKCFFVKFFGTEDHAWIKVEQLKPYHAH) folds into the PWWP domain. Basic and acidic residues-rich tracts occupy residues 92–145 (RAKG…EGKK) and 162–182 (RAQEQSPRKRGRPPKDEKDLT). Residues 92–188 (RAKGKDQTSS…KDLTIPESST (97 aa)) form a disordered region. Phosphoserine is present on Ser130. A Glycyl lysine isopeptide (Lys-Gly) (interchain with G-Cter in SUMO2) cross-link involves residue Lys135. Phosphoserine is present on Ser167. Residues 168–180 (PRKRGRPPKDEKD) constitute a DNA-binding region (a.T hook). Residues Lys176, Lys179, Lys201, and Lys211 each participate in a glycyl lysine isopeptide (Lys-Gly) (interchain with G-Cter in SUMO2) cross-link. The tract at residues 214–217 (DPHF) is interaction with histone H3. An interaction with KDM1B region spans residues 216 to 225 (HFHHFLLSQT). Glycyl lysine isopeptide (Lys-Gly) (interchain with G-Cter in SUMO2) cross-links involve residues Lys227, Lys237, Lys240, and Lys269. The segment at 261-553 (GSITPTDKKI…MSAVYRAYIH (293 aa)) is dehydrogenase domain. 271–285 (GFLGLGLMGSGIVSN) serves as a coordination point for NAD(+). Residue Lys302 forms a Glycyl lysine isopeptide (Lys-Gly) (interchain with G-Cter in SUMO2) linkage. Residues Thr362 and Lys505 each coordinate NAD(+). The residue at position 540 (Ser540) is a Phosphoserine.

This sequence belongs to the HIBADH-related family. NP60 subfamily. As to quaternary structure, homotetramere. Interacts with MAPK14. Interacts with KDM1B at nucleosomes; this interaction stimulates H3K4me1 and H3K4me2 demethylation. Binds to mononucleosomes. Interacts with GATA4; the interaction is required for a synergistic activation of GATA4 target genes transcription.

The protein localises to the nucleus. The protein resides in the chromosome. Cytokine-like nuclear factor with chromatin gene reader activity involved in chromatin modification and regulation of gene expression. Acts as a nucleosome-destabilizing factor that is recruited to genes during transcriptional activation. Recognizes and binds histone H3 without a preference for specific epigenetic markers and also binds DNA. Interacts with KDM1B and promotes its histone demethylase activity by facilitating the capture of H3 tails, they form a multifunctional enzyme complex that modifies transcribed chromatin and facilitates Pol II transcription through nucleosomes. Stimulates the acetylation of 'Lys-56' of nucleosomal histone H3 (H3K56ac) by EP300. With GATA4, co-binds a defined set of heart development genes and coregulates their expression during cardiomyocyte differentiation. Regulates p38 MAP kinase activity by mediating stress activation of MAPK14/p38alpha and specifically regulating MAPK14 signaling. Indirectly promotes phosphorylation of MAPK14 and activation of ATF2. The phosphorylation of MAPK14 requires upstream activity of MAP2K4 and MAP2K6. The chain is Cytokine-like nuclear factor N-PAC (GLYR1) from Pongo abelii (Sumatran orangutan).